The sequence spans 388 residues: Chorismate synthase (388 aa).

NADP(+) is bound by residues Arg39 and Arg45. Residues 130–132, 251–252, Gly296, 311–315, and Arg337 each bind FMN; these read RSS, NA, and KPIPT.

This sequence belongs to the chorismate synthase family. As to quaternary structure, homotetramer. Requires FMNH2 as cofactor.

The enzyme catalyses 5-O-(1-carboxyvinyl)-3-phosphoshikimate = chorismate + phosphate. It functions in the pathway metabolic intermediate biosynthesis; chorismate biosynthesis; chorismate from D-erythrose 4-phosphate and phosphoenolpyruvate: step 7/7. Functionally, catalyzes the anti-1,4-elimination of the C-3 phosphate and the C-6 proR hydrogen from 5-enolpyruvylshikimate-3-phosphate (EPSP) to yield chorismate, which is the branch point compound that serves as the starting substrate for the three terminal pathways of aromatic amino acid biosynthesis. This reaction introduces a second double bond into the aromatic ring system. In Streptococcus mutans serotype c (strain ATCC 700610 / UA159), this protein is Chorismate synthase.